Consider the following 802-residue polypeptide: Leucine--tRNA ligase (802 aa).

The 'HIGH' region signature appears at Pro-40–His-51. The short motif at Lys-576 to Ser-580 is the 'KMSKS' region element. Lys-579 is an ATP binding site.

Belongs to the class-I aminoacyl-tRNA synthetase family.

It is found in the cytoplasm. It catalyses the reaction tRNA(Leu) + L-leucine + ATP = L-leucyl-tRNA(Leu) + AMP + diphosphate. This chain is Leucine--tRNA ligase, found in Bacillus cereus (strain G9842).